Reading from the N-terminus, the 504-residue chain is Fumitremorgin C monooxygenase (504 aa).

The helical transmembrane segment at 9–29 (LPYPGVVGASLLVILGIILLF) threads the bilayer. Heme is bound at residue Cys-442.

The protein belongs to the cytochrome P450 family. The cofactor is heme.

It is found in the membrane. The enzyme catalyses fumitremorgin C + 2 reduced [NADPH--hemoprotein reductase] + 2 O2 = 12alpha,13alpha-dihydroxyfumitremorgin C + 2 oxidized [NADPH--hemoprotein reductase] + 2 H2O + 2 H(+). It functions in the pathway mycotoxin biosynthesis. Cytochrome P450 monooxygenase; part of the gene cluster that mediates the biosynthesis of fumitremorgins, indole alkaloids that carry not only intriguing chemical structures, but also interesting biological and pharmacological activities. The biosynthesis of fumitremorgin-type alkaloids begins by condensation of the two amino acids L-tryptophan and L-proline to brevianamide F, catalyzed by the non-ribosomal peptide synthetase ftmPS/ftmA. Brevianamide F is then prenylated by the prenyltransferase ftmPT1/ftmB in the presence of dimethylallyl diphosphate, resulting in the formation of tryprostatin B. The three cytochrome P450 monooxygenases, ftmP450-1/ftmC, ftmP450-2/ftmE and ftmP450-3/FtmG, are responsible for the conversion of tryprostatin B to 6-hydroxytryprostatin B, tryprostatin A to fumitremorgin C and fumitremorgin C to 12,13-dihydroxyfumitremorgin C, respectively. The putative methyltransferase ftmMT/ftmD is expected for the conversion of 6-hydroxytryprostatin B to tryprostatin A. FtmPT2/FtmH catalyzes the prenylation of 12,13-dihydroxyfumitre-morgin C in the presence of dimethylallyl diphosphate, resulting in the formation of fumitremorgin B. Fumitremorgin B is further converted to verruculogen by ftmOx1/ftmF via the insertion of an endoperoxide bond between the two prenyl moieties. Finally, verruculogen is further converted to fumitremorgin A by the verruculogen prenyltransferase ftmPT3. In Neosartorya fischeri (strain ATCC 1020 / DSM 3700 / CBS 544.65 / FGSC A1164 / JCM 1740 / NRRL 181 / WB 181) (Aspergillus fischerianus), this protein is Fumitremorgin C monooxygenase.